Reading from the N-terminus, the 503-residue chain is tRNA-guanine(15) transglycosylase (503 aa).

The Nucleophile role is filled by aspartate 86. Residue aspartate 121 participates in substrate binding. Zn(2+) is bound by residues cysteine 278, cysteine 280, and cysteine 283.

It belongs to the archaeosine tRNA-ribosyltransferase family. Zn(2+) is required as a cofactor.

The enzyme catalyses guanosine(15) in tRNA + 7-cyano-7-deazaguanine = 7-cyano-7-carbaguanosine(15) in tRNA + guanine. It functions in the pathway tRNA modification; archaeosine-tRNA biosynthesis. Exchanges the guanine residue with 7-cyano-7-deazaguanine (preQ0) at position 15 in the dihydrouridine loop (D-loop) of archaeal tRNAs. This chain is tRNA-guanine(15) transglycosylase, found in Saccharolobus solfataricus (strain ATCC 35092 / DSM 1617 / JCM 11322 / P2) (Sulfolobus solfataricus).